We begin with the raw amino-acid sequence, 234 residues long: Nitroreductase NfnB (234 aa).

25-29 is a binding site for FMN; it reads RRAVR. Residues S55, R105, Y113, and I118 each contribute to the NADP(+) site. FMN is bound by residues Y137, 181–182, and R223; that span reads AL.

It belongs to the nitroreductase family. As to quaternary structure, homodimer. It depends on FMN as a cofactor.

Confers resistance to antitubercular drugs benzothiazinone (BTZ) and dinitrobenzamide (DNB). Inactivates BTZ and DNB by reducing an essential nitro group of these compounds to amino group or to hydroxyl amine, respectively, using NADH or NADPH as source of reducing equivalents; two electrons are transferred. Able to reduce the nitro group of bicyclic nitroimidazole PA-824, but not of quinone menadione, nitrofurazone, methyl-4-nitrobenzoate, 4-nitrobenzene methyl sulfonate or 4-nitroacetophenone. This is Nitroreductase NfnB from Mycolicibacterium smegmatis (strain ATCC 700084 / mc(2)155) (Mycobacterium smegmatis).